A 447-amino-acid polypeptide reads, in one-letter code: 26S proteasome non-ATPase regulatory subunit 12 (447 aa).

The disordered stretch occupies residues 1-23 (MTIGLEPAVSSKTKDKMEQDLSP). Residues 240-411 (NYIEIARCYL…GIATFTTTND (172 aa)) enclose the PCI domain.

Belongs to the proteasome subunit p55 family.

Acts as a regulatory subunit of the 26S proteasome which is involved in the ATP-dependent degradation of ubiquitinated proteins. The polypeptide is 26S proteasome non-ATPase regulatory subunit 12 (psmD12) (Dictyostelium discoideum (Social amoeba)).